The sequence spans 465 residues: Light-independent protochlorophyllide reductase subunit N (465 aa).

[4Fe-4S] cluster contacts are provided by Cys23, Cys48, and Cys108.

It belongs to the BchN/ChlN family. Protochlorophyllide reductase is composed of three subunits; ChlL, ChlN and ChlB. Forms a heterotetramer of two ChlB and two ChlN subunits. It depends on [4Fe-4S] cluster as a cofactor.

The enzyme catalyses chlorophyllide a + oxidized 2[4Fe-4S]-[ferredoxin] + 2 ADP + 2 phosphate = protochlorophyllide a + reduced 2[4Fe-4S]-[ferredoxin] + 2 ATP + 2 H2O. It participates in porphyrin-containing compound metabolism; chlorophyll biosynthesis (light-independent). In terms of biological role, component of the dark-operative protochlorophyllide reductase (DPOR) that uses Mg-ATP and reduced ferredoxin to reduce ring D of protochlorophyllide (Pchlide) to form chlorophyllide a (Chlide). This reaction is light-independent. The NB-protein (ChlN-ChlB) is the catalytic component of the complex. This Trichodesmium erythraeum (strain IMS101) protein is Light-independent protochlorophyllide reductase subunit N.